The following is a 325-amino-acid chain: MSEIADWQPSASIANLLKKAKIVSNIRRFFADRGVLEVETPMMSQATVTDIHLCPFETQFVGPGASQGLKLYLMTSPEYHMKRLLAANSGPIYQMGRCFRNEEAGRYHNPEFTMLEWYRPCFDMYRLMNEVDDLLQEVLDCEASESLSYQQAFLRYLDIDPLSADKEKLREVAAKLDLSNIADTEENRDTLLQLLFVSGVEPHIGLEKPTFIYHFPASQASLAEISSEDHRVAERFEVYFKGVELANGFRELTDAKEQRLRFERDNRQRVAMGLPEQPIDERFLAALEAGLPECSGVALGVDRLIMLALGVERISDVIAFPVYRA.

76-78 (SPE) contacts substrate. ATP contacts are provided by residues 100–102 (RNE) and N109. Y118 is a binding site for substrate. 244-245 (EL) lines the ATP pocket. E251 contributes to the substrate binding site. G300 provides a ligand contact to ATP.

The protein belongs to the class-II aminoacyl-tRNA synthetase family. EpmA subfamily. As to quaternary structure, homodimer.

It carries out the reaction D-beta-lysine + L-lysyl-[protein] + ATP = N(6)-((3R)-3,6-diaminohexanoyl)-L-lysyl-[protein] + AMP + diphosphate + H(+). Its function is as follows. With EpmB is involved in the beta-lysylation step of the post-translational modification of translation elongation factor P (EF-P). Catalyzes the ATP-dependent activation of (R)-beta-lysine produced by EpmB, forming a lysyl-adenylate, from which the beta-lysyl moiety is then transferred to the epsilon-amino group of a conserved specific lysine residue in EF-P. The chain is Elongation factor P--(R)-beta-lysine ligase from Proteus mirabilis (strain HI4320).